A 184-amino-acid chain; its full sequence is Large ribosomal subunit protein bL9 (184 aa).

The tract at residues 156 to 184 is disordered; sequence RQAKLQNQKSEQQEAEQDASKEAADADDS. Residues 173 to 184 are compositionally biased toward basic and acidic residues; that stretch reads DASKEAADADDS.

The protein belongs to the bacterial ribosomal protein bL9 family.

In terms of biological role, binds to the 23S rRNA. The polypeptide is Large ribosomal subunit protein bL9 (Wolbachia pipientis subsp. Culex pipiens (strain wPip)).